The following is a 95-amino-acid chain: Integration host factor subunit beta (95 aa).

This sequence belongs to the bacterial histone-like protein family. In terms of assembly, heterodimer of an alpha and a beta chain.

Functionally, this protein is one of the two subunits of integration host factor, a specific DNA-binding protein that functions in genetic recombination as well as in transcriptional and translational control. This is Integration host factor subunit beta from Shewanella amazonensis (strain ATCC BAA-1098 / SB2B).